A 440-amino-acid polypeptide reads, in one-letter code: Transposon Ty1-DR3 Gag polyprotein (440 aa).

3 stretches are compositionally biased toward polar residues: residues 1-10 (MESQQLSNYP), 48-60 (TKAN…TPAS), and 127-152 (QSQF…GNTF). 3 disordered regions span residues 1–93 (MESQ…MMTQ), 126–173 (PQSQ…RPPP), and 352–440 (GSRN…PETY). A compositionally biased stretch (low complexity) spans 153–165 (TDSSSADSDMTST). The tract at residues 299 to 401 (NNGIHINNKV…NSKSKTARAH (103 aa)) is RNA-binding. Over residues 402-428 (NVSTSINSPSTDNDSISKSTTEPIQLN) the composition is skewed to polar residues. Residue Ser416 is modified to Phosphoserine. Basic and acidic residues predominate over residues 429-440 (NKHDLHLRPETY).

Homotrimer.

It localises to the cytoplasm. Functionally, capsid protein (CA) is the structural component of the virus-like particle (VLP), forming the shell that encapsulates the retrotransposons dimeric RNA genome. The particles are assembled from trimer-clustered units and there are holes in the capsid shells that allow for the diffusion of macromolecules. CA also has nucleocapsid-like chaperone activity, promoting primer tRNA(i)-Met annealing to the multipartite primer-binding site (PBS), dimerization of Ty1 RNA and initiation of reverse transcription. The sequence is that of Transposon Ty1-DR3 Gag polyprotein (TY1A-DR3) from Saccharomyces cerevisiae (strain ATCC 204508 / S288c) (Baker's yeast).